We begin with the raw amino-acid sequence, 230 residues long: Ribose-5-phosphate isomerase A (230 aa).

Residues 32–35 (TGST), 85–88 (DGAD), and 98–101 (KGGG) each bind substrate. Glutamate 107 serves as the catalytic Proton acceptor. Substrate is bound at residue lysine 125.

It belongs to the ribose 5-phosphate isomerase family. As to quaternary structure, homodimer.

It catalyses the reaction aldehydo-D-ribose 5-phosphate = D-ribulose 5-phosphate. Its pathway is carbohydrate degradation; pentose phosphate pathway; D-ribose 5-phosphate from D-ribulose 5-phosphate (non-oxidative stage): step 1/1. In terms of biological role, catalyzes the reversible conversion of ribose-5-phosphate to ribulose 5-phosphate. This is Ribose-5-phosphate isomerase A from Burkholderia ambifaria (strain MC40-6).